Here is a 692-residue protein sequence, read N- to C-terminus: Polyribonucleotide nucleotidyltransferase (692 aa).

Mg(2+)-binding residues include aspartate 484 and aspartate 490. The KH domain occupies 551–610; it reads PRIITIQINPDRIRDVIGPGGKVIRALTEETGATIDIQDNGTVTIASVDGEAGAAAKRRI. The region spanning 620 to 688 is the S1 motif domain; it reads DTIYDGKVAK…RQGKIKLSMK (69 aa).

The protein belongs to the polyribonucleotide nucleotidyltransferase family. In terms of assembly, component of the RNA degradosome, which is a multiprotein complex involved in RNA processing and mRNA degradation. Mg(2+) is required as a cofactor.

Its subcellular location is the cytoplasm. The catalysed reaction is RNA(n+1) + phosphate = RNA(n) + a ribonucleoside 5'-diphosphate. Its function is as follows. Involved in mRNA degradation. Catalyzes the phosphorolysis of single-stranded polyribonucleotides processively in the 3'- to 5'-direction. The polypeptide is Polyribonucleotide nucleotidyltransferase (Acidithiobacillus ferrooxidans (strain ATCC 53993 / BNL-5-31) (Leptospirillum ferrooxidans (ATCC 53993))).